An 88-amino-acid polypeptide reads, in one-letter code: Small ribosomal subunit protein uS17 (88 aa).

Belongs to the universal ribosomal protein uS17 family. As to quaternary structure, part of the 30S ribosomal subunit.

In terms of biological role, one of the primary rRNA binding proteins, it binds specifically to the 5'-end of 16S ribosomal RNA. The protein is Small ribosomal subunit protein uS17 of Mycoplasmopsis agalactiae (strain NCTC 10123 / CIP 59.7 / PG2) (Mycoplasma agalactiae).